The primary structure comprises 359 residues: Aflatoxin B1 aldehyde reductase member 2 (359 aa).

The N-terminal 38 residues, methionine 1 to valine 38, are a transit peptide targeting the mitochondrion. Residue serine 40 is modified to Phosphoserine. An NADP(+)-binding site is contributed by aspartate 72. The active-site Proton donor is tyrosine 77. Lysine 128 carries the post-translational modification N6-acetyllysine. Residue histidine 141 coordinates substrate. NADP(+) is bound by residues serine 171 to asparagine 172, glutamine 197, asparagine 226 to lysine 236, and arginine 250. Lysine 236 carries the post-translational modification N6-succinyllysine. Phosphoserine is present on serine 255. Substrate is bound by residues tyrosine 260 and arginine 263. Residue serine 318–asparagine 326 coordinates NADP(+). Arginine 359 serves as a coordination point for substrate.

Belongs to the aldo/keto reductase family. Aldo/keto reductase 2 subfamily. As to quaternary structure, homodimer. As to expression, detected in brain, liver, small intestine and testis, and at lower levels in heart, prostate, skeletal muscle and spleen. Detected in kidney proximal and distal tubules, endothelial cells lining the Bowman's capsules and some cysts. Detected at low levels in lung and pancreas (at protein level). Widely expressed.

The protein resides in the mitochondrion. It localises to the golgi apparatus. The protein localises to the cytoplasm. The enzyme catalyses 4-hydroxybutanoate + NADP(+) = succinate semialdehyde + NADPH + H(+). Catalyzes the NADPH-dependent reduction of succinic semialdehyde to gamma-hydroxybutyrate. May have an important role in producing the neuromodulator gamma-hydroxybutyrate (GHB). Has broad substrate specificity. Has NADPH-dependent aldehyde reductase activity towards 2-carboxybenzaldehyde, 2-nitrobenzaldehyde and pyridine-2-aldehyde (in vitro). Can reduce 1,2-naphthoquinone and 9,10-phenanthrenequinone (in vitro). Can reduce the dialdehyde protein-binding form of aflatoxin B1 (AFB1) to the non-binding AFB1 dialcohol. May be involved in protection of liver against the toxic and carcinogenic effects of AFB1, a potent hepatocarcinogen. This Homo sapiens (Human) protein is Aflatoxin B1 aldehyde reductase member 2 (AKR7A2).